Consider the following 326-residue polypeptide: Porphobilinogen deaminase (326 aa).

C251 carries the post-translational modification S-(dipyrrolylmethanemethyl)cysteine.

It belongs to the HMBS family. It depends on dipyrromethane as a cofactor.

The enzyme catalyses 4 porphobilinogen + H2O = hydroxymethylbilane + 4 NH4(+). Its pathway is porphyrin-containing compound metabolism; protoporphyrin-IX biosynthesis; coproporphyrinogen-III from 5-aminolevulinate: step 2/4. Tetrapolymerization of the monopyrrole PBG into the hydroxymethylbilane pre-uroporphyrinogen in several discrete steps. The sequence is that of Porphobilinogen deaminase (HEM3) from Eremothecium gossypii (strain ATCC 10895 / CBS 109.51 / FGSC 9923 / NRRL Y-1056) (Yeast).